We begin with the raw amino-acid sequence, 507 residues long: Chromosomal replication initiator protein DnaA (507 aa).

The tract at residues 1–112 (MTDDPGSGFT…PATDEADDTT (112 aa)) is domain I, interacts with DnaA modulators. Residues 99–155 (RIAPPATDEADDTTVPPSENPATTSPDTTTDNDEIDDSAAARGDNQHSWPSYFTERP) form a disordered region. Residues 113–127 (VPPSENPATTSPDTT) show a composition bias toward polar residues. Positions 113 to 166 (VPPSENPATTSPDTTTDNDEIDDSAAARGDNQHSWPSYFTERPHNTDSATAGVT) are domain II. Residues 167-383 (SLNRRYTFDT…GALIRVTAFA (217 aa)) are domain III, AAA+ region. ATP-binding residues include Gly211, Gly213, Lys214, and Thr215. The segment at 384–507 (SLNKTPIDKA…TTRIRQRSKR (124 aa)) is domain IV, binds dsDNA.

It belongs to the DnaA family. As to quaternary structure, oligomerizes as a right-handed, spiral filament on DNA at oriC.

The protein localises to the cytoplasm. In terms of biological role, plays an essential role in the initiation and regulation of chromosomal replication. ATP-DnaA binds to the origin of replication (oriC) to initiate formation of the DNA replication initiation complex once per cell cycle. Binds the DnaA box (a 9 base pair repeat at the origin) and separates the double-stranded (ds)DNA. Forms a right-handed helical filament on oriC DNA; dsDNA binds to the exterior of the filament while single-stranded (ss)DNA is stabiized in the filament's interior. The ATP-DnaA-oriC complex binds and stabilizes one strand of the AT-rich DNA unwinding element (DUE), permitting loading of DNA polymerase. After initiation quickly degrades to an ADP-DnaA complex that is not apt for DNA replication. Binds acidic phospholipids. The polypeptide is Chromosomal replication initiator protein DnaA (Mycobacterium tuberculosis (strain ATCC 25177 / H37Ra)).